The primary structure comprises 119 residues: Large ribosomal subunit protein uL24 (119 aa).

The protein belongs to the universal ribosomal protein uL24 family. In terms of assembly, part of the 50S ribosomal subunit.

One of two assembly initiator proteins, it binds directly to the 5'-end of the 23S rRNA, where it nucleates assembly of the 50S subunit. Functionally, located at the polypeptide exit tunnel on the outside of the subunit. This Saccharolobus solfataricus (strain ATCC 35092 / DSM 1617 / JCM 11322 / P2) (Sulfolobus solfataricus) protein is Large ribosomal subunit protein uL24.